The primary structure comprises 265 residues: MDLATIAFAFSLVLLSGLSTSIGGALAVGKREPGPKFMAAALGLSAGVMLYVSFMEILPEALKKLESTLGDEARATWTMMGAFFAGIAIITIIDRLVPEEINPHEPATTEEEARRKRLIKTGMFTAFALAIHNFPEGFATFLSGLEAPEIAIPVAVAIAIHNIPEGIAVAVPLRSATGSRKKAFWWATLSGLAEPLGALIGFALLMPFIGPMTFGISFAVIAGIMVFISLDELLPTAEETGEHHCAIYGLIAGMAVMAVSLALFI.

8 consecutive transmembrane segments (helical) span residues 6 to 26 (IAFA…GGAL), 37 to 57 (FMAA…FMEI), 77 to 97 (WTMM…DRLV), 122 to 142 (GMFT…ATFL), 150 to 170 (IAIP…IAVA), 184 to 204 (FWWA…GFAL), 208 to 228 (FIGP…MVFI), and 245 to 265 (CAIY…ALFI). Residues asparagine 133 and glutamate 136 each contribute to the Fe(2+) site. Residues glutamate 136 and histidine 161 each coordinate Zn(2+). Fe(2+) is bound by residues asparagine 162, glutamate 165, and glutamate 194. Glutamate 165 is a Zn(2+) binding site.

Belongs to the ZIP transporter (TC 2.A.5) family. ZupT subfamily.

The protein localises to the cell membrane. The catalysed reaction is Zn(2+)(in) = Zn(2+)(out). In terms of biological role, mediates zinc uptake. May also transport other divalent cations. This Corynebacterium aurimucosum (strain ATCC 700975 / DSM 44827 / CIP 107346 / CN-1) (Corynebacterium nigricans) protein is Zinc transporter ZupT.